Here is a 625-residue protein sequence, read N- to C-terminus: tRNA uridine 5-carboxymethylaminomethyl modification enzyme MnmG (625 aa).

Residues 13–18 (GGGHAG), Val-125, and Ser-182 contribute to the FAD site. An NAD(+)-binding site is contributed by 276–290 (GPRYCPSIEDKITRF). Gln-373 provides a ligand contact to FAD.

It belongs to the MnmG family. As to quaternary structure, homodimer. Heterotetramer of two MnmE and two MnmG subunits. FAD serves as cofactor.

It localises to the cytoplasm. NAD-binding protein involved in the addition of a carboxymethylaminomethyl (cmnm) group at the wobble position (U34) of certain tRNAs, forming tRNA-cmnm(5)s(2)U34. This chain is tRNA uridine 5-carboxymethylaminomethyl modification enzyme MnmG, found in Lactococcus lactis subsp. cremoris (strain MG1363).